The chain runs to 335 residues: Deoxyhypusine hydroxylase (335 aa).

HEAT-like PBS-type repeat units lie at residues 74–100 (LKHE…VLED), 107–133 (CRHE…LRDD), 203–233 (KRYR…LAEG), 241–267 (FRHE…TLSD), and 274–301 (VRHE…FVND). Fe cation-binding residues include His76, Glu77, His109, and Glu110. Residues His243, Glu244, His276, and Glu277 each coordinate Fe cation.

Belongs to the deoxyhypusine hydroxylase family. Fe(2+) is required as a cofactor.

It is found in the cytoplasm. Its subcellular location is the nucleus. It catalyses the reaction [eIF5A protein]-deoxyhypusine + AH2 + O2 = [eIF5A protein]-hypusine + A + H2O. It participates in protein modification; eIF5A hypusination. In terms of biological role, catalyzes the hydroxylation of the N(6)-(4-aminobutyl)-L-lysine intermediate to form hypusine, an essential post-translational modification only found in mature eIF-5A factor. The protein is Deoxyhypusine hydroxylase of Coccidioides immitis (strain RS) (Valley fever fungus).